Here is a 382-residue protein sequence, read N- to C-terminus: Biotin synthase (382 aa).

Residues 83-318 (CCGNVVDLCS…EQILRYAGGR (236 aa)) form the Radical SAM core domain. Residues Cys101, Cys105, and Cys108 each contribute to the [4Fe-4S] cluster site. [2Fe-2S] cluster-binding residues include Cys146, Cys183, Cys243, and Arg313.

This sequence belongs to the radical SAM superfamily. Biotin synthase family. In terms of assembly, homodimer. It depends on [4Fe-4S] cluster as a cofactor. [2Fe-2S] cluster is required as a cofactor.

It carries out the reaction (4R,5S)-dethiobiotin + (sulfur carrier)-SH + 2 reduced [2Fe-2S]-[ferredoxin] + 2 S-adenosyl-L-methionine = (sulfur carrier)-H + biotin + 2 5'-deoxyadenosine + 2 L-methionine + 2 oxidized [2Fe-2S]-[ferredoxin]. It functions in the pathway cofactor biosynthesis; biotin biosynthesis; biotin from 7,8-diaminononanoate: step 2/2. In terms of biological role, catalyzes the conversion of dethiobiotin (DTB) to biotin by the insertion of a sulfur atom into dethiobiotin via a radical-based mechanism. The sequence is that of Biotin synthase from Crocosphaera subtropica (strain ATCC 51142 / BH68) (Cyanothece sp. (strain ATCC 51142)).